The chain runs to 524 residues: Chromosomal replication initiator protein DnaA (524 aa).

The interval 1 to 73 is domain I, interacts with DnaA modulators; sequence MELPESAWEQ…DELLSSADHH (73 aa). The tract at residues 73–187 is domain II; it reads HPITSVEISV…DVEGGLQHKS (115 aa). 3 stretches are compositionally biased toward polar residues: residues 86-95, 106-126, and 153-165; these read RSTSFETNQG, APRQ…QPQQ, and NGYN…QPYN. Positions 86–173 are disordered; the sequence is RSTSFETNQG…YNDNPMGQGK (88 aa). The interval 188–404 is domain III, AAA+ region; sequence NLNPTFIFDN…GALKRVIANA (217 aa). Residues Gly232, Gly234, Lys235, and Thr236 each coordinate ATP. Residues 405 to 524 are domain IV, binds dsDNA; it reads HFTGRDISVE…VKNLLRTLTT (120 aa).

Belongs to the DnaA family. As to quaternary structure, oligomerizes as a right-handed, spiral filament on DNA at oriC.

The protein resides in the cytoplasm. Its function is as follows. Plays an essential role in the initiation and regulation of chromosomal replication. ATP-DnaA binds to the origin of replication (oriC) to initiate formation of the DNA replication initiation complex once per cell cycle. Binds the DnaA box (a 9 base pair repeat at the origin) and separates the double-stranded (ds)DNA. Forms a right-handed helical filament on oriC DNA; dsDNA binds to the exterior of the filament while single-stranded (ss)DNA is stabiized in the filament's interior. The ATP-DnaA-oriC complex binds and stabilizes one strand of the AT-rich DNA unwinding element (DUE), permitting loading of DNA polymerase. After initiation quickly degrades to an ADP-DnaA complex that is not apt for DNA replication. Binds acidic phospholipids. This is Chromosomal replication initiator protein DnaA from Saccharophagus degradans (strain 2-40 / ATCC 43961 / DSM 17024).